Here is a 640-residue protein sequence, read N- to C-terminus: RAP domain-containing protein, chloroplastic (640 aa).

The N-terminal 32 residues, 1-32 (MEAALLRPPPLAARGGVSIAIAFSVSRLPSAA), are a transit peptide targeting the chloroplast. The interval 111 to 158 (SLQRMVASPKKKNKKKKSKKTNLKQKKAAEPKPPRDTDDDEDDEEEAD) is disordered. Over residues 119 to 136 (PKKKNKKKKSKKTNLKQK) the composition is skewed to basic residues. The segment covering 137-146 (KAAEPKPPRD) has biased composition (basic and acidic residues). Residues 147–158 (TDDDEDDEEEAD) show a composition bias toward acidic residues. An RAP domain is found at 575–633 (LAFEIDGPSHFSRNLGTPLGHTAFKRRYIAAAGWNLVSLSHQEWENLEGEFEQLEYLRR).

As to expression, expressed in roots, leaf sheaths, veins of leaf blade, mature leaves, endodermis of culm, panicles and anthers.

It is found in the plastid. It localises to the chloroplast. Functionally, probable RNA-binding protein that plays an essential role in chloroplast development. Regulates the ribosomal proteins homeostasis and ribosomal RNA development in chloroplasts. Involved the regulation of 16S rRNA and required for the expression of chloroplast-associated photosynthetic genes. The chain is RAP domain-containing protein, chloroplastic from Oryza sativa subsp. japonica (Rice).